Reading from the N-terminus, the 401-residue chain is MALIIQKFGGTSVANIDRIKKIAPIIKAEIAKNNQVIVVVSAMAGVTNQLVTLCNEVSSLNNISQFAEYDVALSSGEIVTASLLALALQEEDIKAQSFLAWQLPILTDNNHSKALVESITTDLLEKYLQLNTVPIIAGFQGTNKSNRLTTLGRGGSDTTAALIAAAMKAKRCDIYTDVEGIFTADPRIIPNAKKIKEIDFLEMLELASSGAKVLHPRAVELVMRYKIDMRVLSTFSPNTEGTLITSKDKNMENGIINSITSNKNLLKISVKSISLSFLQVANMITQNNNHIEFMQEIKNNEEYSFITNLTDENNLQALLTNLKNDKQIQDFTFDAEIATISLIGYGIKNDCKVLEMILSKLTKDNINVNMIQLSEVKITLLINDQDAEKTIFNLYNLFKIS.

Belongs to the aspartokinase family.

It carries out the reaction L-aspartate + ATP = 4-phospho-L-aspartate + ADP. It functions in the pathway amino-acid biosynthesis; L-lysine biosynthesis via DAP pathway; (S)-tetrahydrodipicolinate from L-aspartate: step 1/4. Its pathway is amino-acid biosynthesis; L-methionine biosynthesis via de novo pathway; L-homoserine from L-aspartate: step 1/3. The protein operates within amino-acid biosynthesis; L-threonine biosynthesis; L-threonine from L-aspartate: step 1/5. The sequence is that of Aspartokinase (lysC) from Rickettsia felis (strain ATCC VR-1525 / URRWXCal2) (Rickettsia azadi).